The primary structure comprises 279 residues: 3-methyl-2-oxobutanoate hydroxymethyltransferase (279 aa).

Residues Asp-44 and Asp-83 each coordinate Mg(2+). Residues Asp-44–Ser-45, Asp-83, and Lys-113 contribute to the 3-methyl-2-oxobutanoate site. Glu-115 is a binding site for Mg(2+). Residue Glu-182 is the Proton acceptor of the active site.

The protein belongs to the PanB family. Homodecamer; pentamer of dimers. Mg(2+) is required as a cofactor.

The protein localises to the cytoplasm. The enzyme catalyses 3-methyl-2-oxobutanoate + (6R)-5,10-methylene-5,6,7,8-tetrahydrofolate + H2O = 2-dehydropantoate + (6S)-5,6,7,8-tetrahydrofolate. The protein operates within cofactor biosynthesis; (R)-pantothenate biosynthesis; (R)-pantoate from 3-methyl-2-oxobutanoate: step 1/2. Its function is as follows. Catalyzes the reversible reaction in which hydroxymethyl group from 5,10-methylenetetrahydrofolate is transferred onto alpha-ketoisovalerate to form ketopantoate. In Dehalococcoides mccartyi (strain ATCC BAA-2100 / JCM 16839 / KCTC 5957 / BAV1), this protein is 3-methyl-2-oxobutanoate hydroxymethyltransferase.